We begin with the raw amino-acid sequence, 259 residues long: ATP synthase subunit a 1 (259 aa).

5 helical membrane passes run 30 to 50 (TLHVDTLFFSVFLGAVFLFFF), 90 to 110 (LIAPLALSIFAWVFLMNAMDL), 135 to 155 (DLNATFGMSISVFFLIIFYSL), 209 to 229 (LIFILIALLPWWVQPALSFPW), and 230 to 250 (AVFHILIITLQAFIFMVLTIV).

Belongs to the ATPase A chain family. As to quaternary structure, F-type ATPases have 2 components, CF(1) - the catalytic core - and CF(0) - the membrane proton channel. CF(1) has five subunits: alpha(3), beta(3), gamma(1), delta(1), epsilon(1). CF(0) has three main subunits: a(1), b(2) and c(9-12). The alpha and beta chains form an alternating ring which encloses part of the gamma chain. CF(1) is attached to CF(0) by a central stalk formed by the gamma and epsilon chains, while a peripheral stalk is formed by the delta and b chains.

The protein localises to the cell inner membrane. Key component of the proton channel; it plays a direct role in the translocation of protons across the membrane. This is ATP synthase subunit a 1 from Methylococcus capsulatus (strain ATCC 33009 / NCIMB 11132 / Bath).